A 371-amino-acid chain; its full sequence is Maltose/maltodextrin import ATP-binding protein MalK (371 aa).

Residues 4-234 form the ABC transporter domain; the sequence is VQLQNVTKAW…PADRFVAGFI (231 aa). Residue 36-43 participates in ATP binding; sequence GPSGCGKS.

Belongs to the ABC transporter superfamily. Maltooligosaccharide importer (TC 3.A.1.1.1) family. The complex is composed of two ATP-binding proteins (MalK), two transmembrane proteins (MalG and MalK) and a solute-binding protein (MalE).

It is found in the cell inner membrane. The catalysed reaction is D-maltose(out) + ATP + H2O = D-maltose(in) + ADP + phosphate + H(+). In terms of biological role, part of the ABC transporter complex MalEFGK involved in maltose/maltodextrin import. Responsible for energy coupling to the transport system. This Shigella flexneri serotype 5b (strain 8401) protein is Maltose/maltodextrin import ATP-binding protein MalK.